The chain runs to 330 residues: DNA-directed RNA polymerase subunit alpha (330 aa).

Residues 1–231 are alpha N-terminal domain (alpha-NTD); that stretch reads MQTNLLKPKT…EQLAVFAQLE (231 aa). Positions 250–330 are alpha C-terminal domain (alpha-CTD); it reads FDPILLRPVD…SWPPAGLDKR (81 aa).

This sequence belongs to the RNA polymerase alpha chain family. In terms of assembly, homodimer. The RNAP catalytic core consists of 2 alpha, 1 beta, 1 beta' and 1 omega subunit. When a sigma factor is associated with the core the holoenzyme is formed, which can initiate transcription.

The catalysed reaction is RNA(n) + a ribonucleoside 5'-triphosphate = RNA(n+1) + diphosphate. Its function is as follows. DNA-dependent RNA polymerase catalyzes the transcription of DNA into RNA using the four ribonucleoside triphosphates as substrates. The chain is DNA-directed RNA polymerase subunit alpha from Polaromonas naphthalenivorans (strain CJ2).